The sequence spans 123 residues: Small ribosomal subunit protein uS11 (123 aa).

Positions 1-22 are disordered; the sequence is MAKKRKKKLSSPEGISHIHASA.

It belongs to the universal ribosomal protein uS11 family. As to quaternary structure, part of the 30S ribosomal subunit. Interacts with proteins S7 and S18. Binds to IF-3.

In terms of biological role, located on the platform of the 30S subunit, it bridges several disparate RNA helices of the 16S rRNA. Forms part of the Shine-Dalgarno cleft in the 70S ribosome. This chain is Small ribosomal subunit protein uS11, found in Malacoplasma penetrans (strain HF-2) (Mycoplasma penetrans).